Consider the following 126-residue polypeptide: Fluoride-specific ion channel FluC (126 aa).

4 helical membrane passes run 4–24 (ILAIALGAAIGANLRYGIGLW), 35–55 (YGTFIINLLGCLGIGLLLTLI), 68–88 (MLVTGLLGGFTTFSTFGYESF), and 100–120 (IGYMVGSVVGGLIAVIIGVGL). The Na(+) site is built by G75 and T78.

This sequence belongs to the fluoride channel Fluc/FEX (TC 1.A.43) family.

The protein resides in the cell membrane. The enzyme catalyses fluoride(in) = fluoride(out). Na(+) is not transported, but it plays an essential structural role and its presence is essential for fluoride channel function. Functionally, fluoride-specific ion channel. Important for reducing fluoride concentration in the cell, thus reducing its toxicity. This Chloroflexus aurantiacus (strain ATCC 29366 / DSM 635 / J-10-fl) protein is Fluoride-specific ion channel FluC.